Here is a 456-residue protein sequence, read N- to C-terminus: Chromosomal replication initiator protein DnaA (456 aa).

Residues 1–73 (MEIYLDNLWD…ADVVHDILGY (73 aa)) form a domain I, interacts with DnaA modulators region. Residues 73 to 117 (YPVEIYLTTFLVEDSRKNDSGLIWSEHKSVNILGENLSIPKPLPA) are domain II. Residues 118-334 (NLNAKYMFSR…GALTRVVTYI (217 aa)) are domain III, AAA+ region. Residues Gly162, Gly164, Lys165, and Thr166 each coordinate ATP. The interval 335–456 (SISGLPMTVE…SDRINFSSRH (122 aa)) is domain IV, binds dsDNA.

It belongs to the DnaA family. In terms of assembly, oligomerizes as a right-handed, spiral filament on DNA at oriC.

Its subcellular location is the cytoplasm. Its function is as follows. Plays an essential role in the initiation and regulation of chromosomal replication. ATP-DnaA binds to the origin of replication (oriC) to initiate formation of the DNA replication initiation complex once per cell cycle. Binds the DnaA box (a 9 base pair repeat at the origin) and separates the double-stranded (ds)DNA. Forms a right-handed helical filament on oriC DNA; dsDNA binds to the exterior of the filament while single-stranded (ss)DNA is stabiized in the filament's interior. The ATP-DnaA-oriC complex binds and stabilizes one strand of the AT-rich DNA unwinding element (DUE), permitting loading of DNA polymerase. After initiation quickly degrades to an ADP-DnaA complex that is not apt for DNA replication. Binds acidic phospholipids. This chain is Chromosomal replication initiator protein DnaA, found in Trichodesmium erythraeum (strain IMS101).